Here is a 283-residue protein sequence, read N- to C-terminus: Non-selective voltage-gated ion channel VDAC1 (283 aa).

At alanine 2 the chain carries N-acetylalanine. Lysine 12 is an ATP binding site. Lysine 12 participates in a covalent cross-link: Glycyl lysine isopeptide (Lys-Gly) (interchain with G-Cter in ubiquitin). Position 13 is a phosphoserine (serine 13). A Phosphothreonine modification is found at threonine 19. Lysine 20 lines the ATP pocket. Lysine 20 is subject to N6-acetyllysine; alternate. Lysine 20 carries the post-translational modification N6-succinyllysine; alternate. A Glycyl lysine isopeptide (Lys-Gly) (interchain with G-Cter in ubiquitin); alternate cross-link involves residue lysine 20. 2 beta stranded membrane passes run 26-35 and 39-47; these read LIKLDLKTKS and LEFTSSGSA. Glycyl lysine isopeptide (Lys-Gly) (interchain with G-Cter in ubiquitin) cross-links involve residues lysine 53 and lysine 61. A beta stranded membrane pass occupies residues 54–64; the sequence is VNGSLETKYRW. The residue at position 67 (tyrosine 67) is a Phosphotyrosine. Transmembrane regions (beta stranded) follow at residues 69–76, 80–89, and 95–104; these read LTFTEKWN, TLGTEITVED, and LKLTFDSSFS. Threonine 107 is subject to Phosphothreonine. Lysine 109 carries the N6-acetyllysine; alternate modification. A Glycyl lysine isopeptide (Lys-Gly) (interchain with G-Cter in ubiquitin); alternate cross-link involves residue lysine 109. Lysine 110 is covalently cross-linked (Glycyl lysine isopeptide (Lys-Gly) (interchain with G-Cter in ubiquitin)). Transmembrane regions (beta stranded) follow at residues 111 to 120, 123 to 130, 137 to 145, and 150 to 158; these read NAKIKTGYKR, INLGCDVD, SIRGALVLG, and LAGYQMNFE. At serine 137 the chain carries Phosphoserine. A Glycyl lysine isopeptide (Lys-Gly) (interchain with G-Cter in ubiquitin) cross-link involves residue lysine 161. A run of 6 beta stranded transmembrane segments spans residues 163–175, 178–185, 189–198, 202–211, 218–227, and 231–238; these read RVTQ…GYKT, FQLHTNVN, EFGGSIYQKV, LETAVNLAWT, RFGIAAKYQV, and ACFSAKVN. Position 193 is a phosphoserine; by NEK1 (serine 193). The residue at position 240 (serine 240) is a Phosphoserine. An NAD(+)-binding site is contributed by 242 to 244; it reads LIG. A beta stranded transmembrane segment spans residues 242–251; it reads LIGLGYTQTL. Position 252 is an N6-acetyllysine (lysine 252). A beta stranded transmembrane segment spans residues 254 to 263; that stretch reads GIKLTLSALL. An NAD(+)-binding site is contributed by 260 to 264; it reads SALLD. Lysine 266 is modified (N6-acetyllysine; alternate). Lysine 266 participates in a covalent cross-link: Glycyl lysine isopeptide (Lys-Gly) (interchain with G-Cter in ubiquitin); alternate. A beta stranded transmembrane segment spans residues 273–282; sequence HKLGLGLEFQ. Lysine 274 participates in a covalent cross-link: Glycyl lysine isopeptide (Lys-Gly) (interchain with G-Cter in ubiquitin).

This sequence belongs to the eukaryotic mitochondrial porin family. In terms of assembly, homodimer and homotrimer; in response to cyclic AMP or calcium; oligomerization is required for scramblase activity. Component of the mitochondrial permeability transition pore complex (mPTPC), at least composed of SPG7, VDAC1 and PPIF. Interacts with SPG7, NIPSNAP2 and SLC25A30. Interacts with hexokinases including HK1. The HK1-VDAC1 complex interacts with ATF2. Interacts with BCL2L1. Interacts with BAK1. Interacts with RTL10/BOP (via BH3 domain). Interacts with amyloid-beta and APP; induces VDAC1 dephosphorylation. Interacts with TMEM41B. Interacts with BCAP31. Interacts with HSPA9; this interaction couples ITPR1 to VDAC1. Phosphorylation at Ser-193 by NEK1 promotes the closed conformational state preventing excessive mitochondrial membrane permeability and subsequent apoptotic cell death after injury. Phosphorylation by the AKT-GSK3B axis stabilizes the protein probably by preventing ubiquitin-mediated proteasomal degradation. In terms of processing, ubiquitinated. Undergoes monoubiquitination and polyubiquitination by PRKN; monoubiquitination at Lys-274 inhibits apoptosis, whereas polyubiquitination leads to its degradation and promotes mitophagy. Deubiquitinated by USP30. Widely expressed. High levels in heart and kidney with lower levels in brain and ascitic tumor. Very low levels in liver.

It is found in the mitochondrion outer membrane. Its subcellular location is the cell membrane. The protein localises to the membrane raft. It carries out the reaction Ca(2+)(in) = Ca(2+)(out). It catalyses the reaction Na(+)(in) = Na(+)(out). The catalysed reaction is chloride(in) = chloride(out). The enzyme catalyses Mg(2+)(in) = Mg(2+)(out). It carries out the reaction K(+)(in) = K(+)(out). It catalyses the reaction ATP(in) = ATP(out). The catalysed reaction is L-glutamate(out) = L-glutamate(in). The enzyme catalyses dopamine(out) = dopamine(in). It carries out the reaction acetylcholine(in) = acetylcholine(out). It catalyses the reaction Fe(III)-[cytochrome c](out) = Fe(III)-[cytochrome c](in). The catalysed reaction is a 1,2-diacyl-sn-glycero-3-phosphocholine(in) = a 1,2-diacyl-sn-glycero-3-phosphocholine(out). The enzyme catalyses a 1,2-diacyl-sn-glycero-3-phospho-L-serine(in) = a 1,2-diacyl-sn-glycero-3-phospho-L-serine(out). Its activity is regulated as follows. Inhibited by nitric oxide. Voltage-gated ion channel activity is inhibited by lanthanum(3+) and ruthenium red. Mitochondrial calcium transport is inhibited by lanthanum(3+), ruthenium red and Ru360. Its function is as follows. Non-selective voltage-gated ion channel that mediates the transport of anions and cations through the mitochondrion outer membrane and plasma membrane. The channel at the outer mitochondrial membrane allows diffusion of small hydrophilic molecules; in the plasma membrane it is involved in cell volume regulation and apoptosis. It adopts an open conformation at low or zero membrane potential and a closed conformation at potentials above 30-40 mV. The open state has a weak anion selectivity whereas the closed state is cation-selective. Binds various signaling molecules, including the sphingolipid ceramide, the phospholipid phosphatidylcholine, and the sterols cholesterol and oxysterol. In depolarized mitochondria, acts downstream of PRKN and PINK1 to promote mitophagy or prevent apoptosis; polyubiquitination by PRKN promotes mitophagy, while monoubiquitination by PRKN decreases mitochondrial calcium influx which ultimately inhibits apoptosis. May participate in the formation of the permeability transition pore complex (PTPC) responsible for the release of mitochondrial products that triggers apoptosis. May mediate ATP export from cells. Part of a complex composed of HSPA9, ITPR1 and VDAC1 that regulates mitochondrial calcium-dependent apoptosis by facilitating calcium transport from the ER lumen to the mitochondria intermembrane space thus providing calcium for the downstream calcium channel MCU that directly releases it into mitochondria matrix. In terms of biological role, catalyzes the scrambling of phospholipids across the outer mitochondrial membrane; the mechanism is unrelated to channel activity and is capable of translocating both anionic and zwitterionic phospholipids. The sequence is that of Non-selective voltage-gated ion channel VDAC1 from Rattus norvegicus (Rat).